We begin with the raw amino-acid sequence, 123 residues long: Small ribosomal subunit protein uS12 (123 aa).

Aspartate 89 carries the post-translational modification 3-methylthioaspartic acid.

This sequence belongs to the universal ribosomal protein uS12 family. In terms of assembly, part of the 30S ribosomal subunit. Contacts proteins S8 and S17. May interact with IF1 in the 30S initiation complex.

Its function is as follows. With S4 and S5 plays an important role in translational accuracy. Interacts with and stabilizes bases of the 16S rRNA that are involved in tRNA selection in the A site and with the mRNA backbone. Located at the interface of the 30S and 50S subunits, it traverses the body of the 30S subunit contacting proteins on the other side and probably holding the rRNA structure together. The combined cluster of proteins S8, S12 and S17 appears to hold together the shoulder and platform of the 30S subunit. This chain is Small ribosomal subunit protein uS12, found in Rhodopseudomonas palustris (strain HaA2).